The chain runs to 185 residues: Ribosome-recycling factor (185 aa).

This sequence belongs to the RRF family.

It localises to the cytoplasm. Functionally, responsible for the release of ribosomes from messenger RNA at the termination of protein biosynthesis. May increase the efficiency of translation by recycling ribosomes from one round of translation to another. The protein is Ribosome-recycling factor of Serratia proteamaculans (strain 568).